The sequence spans 151 residues: MSSSSLSPTAGRTSGSDGDSAADTHRREKRRLSNRESARRSRLRKQQHLDELVQEVARLQADNARVAARARDIASQYTRVEQENTVLRARAAELGDRLRSVNEVLRLVEEFSGVAMDIQEEMPADDPLLRPWQLPYPAAAMPMGAPHMLHY.

Residues 1-17 (MSSSSLSPTAGRTSGSD) are compositionally biased toward polar residues. Positions 1–47 (MSSSSLSPTAGRTSGSDGDSAADTHRREKRRLSNRESARRSRLRKQQ) are disordered. The segment covering 22 to 39 (ADTHRREKRRLSNRESAR) has biased composition (basic and acidic residues). A bZIP domain is found at 24–87 (THRREKRRLS…TRVEQENTVL (64 aa)). The segment at 26–45 (RREKRRLSNRESARRSRLRK) is basic motif. The tract at residues 52–59 (LVQEVARL) is leucine-zipper.

It belongs to the bZIP family. In terms of tissue distribution, roots and shoots of young plants, and basal portion of leaves.

It localises to the nucleus. In terms of biological role, may contribute to developmentally specific patterns of gene expression. Binds specifically to ocs elements which are transcriptional enhancer found in the promoters of several plant genes. OCSBF-1 is able to bind to a site within each half of the ocs element as well as to animal AP-1 and CREB sites. In Zea mays (Maize), this protein is Ocs element-binding factor 1 (OBF1).